Reading from the N-terminus, the 102-residue chain is uncharacterized protein (102 aa).

This is an uncharacterized protein from Acidianus filamentous virus 1 (isolate United States/Yellowstone) (AFV-1).